Consider the following 581-residue polypeptide: Arginine--tRNA ligase (581 aa).

Positions 126-136 (PNLAKEMHVGH) match the 'HIGH' region motif.

It belongs to the class-I aminoacyl-tRNA synthetase family. As to quaternary structure, monomer.

The protein resides in the cytoplasm. The enzyme catalyses tRNA(Arg) + L-arginine + ATP = L-arginyl-tRNA(Arg) + AMP + diphosphate. This Shewanella denitrificans (strain OS217 / ATCC BAA-1090 / DSM 15013) protein is Arginine--tRNA ligase.